The primary structure comprises 95 residues: Large ribosomal subunit protein bL27 (95 aa).

The propeptide occupies 1–6; that stretch reads MFLQLF.

This sequence belongs to the bacterial ribosomal protein bL27 family. The N-terminus is cleaved by ribosomal processing cysteine protease Prp.

The polypeptide is Large ribosomal subunit protein bL27 (Symbiobacterium thermophilum (strain DSM 24528 / JCM 14929 / IAM 14863 / T)).